A 975-amino-acid chain; its full sequence is Glycine dehydrogenase (decarboxylating) (975 aa).

Lys702 carries the N6-(pyridoxal phosphate)lysine modification.

This sequence belongs to the GcvP family. As to quaternary structure, the glycine cleavage system is composed of four proteins: P, T, L and H. Pyridoxal 5'-phosphate is required as a cofactor.

It catalyses the reaction N(6)-[(R)-lipoyl]-L-lysyl-[glycine-cleavage complex H protein] + glycine + H(+) = N(6)-[(R)-S(8)-aminomethyldihydrolipoyl]-L-lysyl-[glycine-cleavage complex H protein] + CO2. In terms of biological role, the glycine cleavage system catalyzes the degradation of glycine. The P protein binds the alpha-amino group of glycine through its pyridoxal phosphate cofactor; CO(2) is released and the remaining methylamine moiety is then transferred to the lipoamide cofactor of the H protein. The sequence is that of Glycine dehydrogenase (decarboxylating) from Xanthomonas campestris pv. campestris (strain 8004).